Reading from the N-terminus, the 400-residue chain is Lysophospholipid transporter LplT (400 aa).

The next 12 membrane-spanning stretches (helical) occupy residues 19 to 39 (VIVA…ATLA), 53 to 73 (VLQM…GQIA), 91 to 111 (AGAA…LVGI), 139 to 159 (LMEA…GVLA), 164 to 184 (IAAL…NLFI), 195 to 213 (SWRL…VVLW), 227 to 247 (LFWG…PVAL), 257 to 277 (YLNA…AKLV), 281 to 301 (TVSR…IFSL), 304 to 324 (ALLP…FFVV), 352 to 372 (NSAM…GVPA), and 373 to 393 (VAIG…LWIW).

The protein belongs to the major facilitator superfamily. LplT (TC 2.A.1.42) family.

It localises to the cell inner membrane. In terms of biological role, catalyzes the facilitated diffusion of 2-acyl-glycero-3-phosphoethanolamine (2-acyl-GPE) into the cell. The sequence is that of Lysophospholipid transporter LplT from Salmonella heidelberg (strain SL476).